The following is a 125-amino-acid chain: Ribosome-binding factor A (125 aa).

The protein belongs to the RbfA family. Monomer. Binds 30S ribosomal subunits, but not 50S ribosomal subunits or 70S ribosomes.

It localises to the cytoplasm. In terms of biological role, one of several proteins that assist in the late maturation steps of the functional core of the 30S ribosomal subunit. Associates with free 30S ribosomal subunits (but not with 30S subunits that are part of 70S ribosomes or polysomes). Required for efficient processing of 16S rRNA. May interact with the 5'-terminal helix region of 16S rRNA. This Methylobacillus flagellatus (strain ATCC 51484 / DSM 6875 / VKM B-1610 / KT) protein is Ribosome-binding factor A.